The following is a 282-amino-acid chain: sn-glycerol-3-phosphate transport system permease protein UgpE (282 aa).

6 helical membrane-spanning segments follow: residues 14–34, 86–106, 112–132, 146–168, 201–221, and 248–268; these read LILI…FVAS, MAIA…IVFF, MFFF…RILP, YAGL…QFFL, IAAL…WPLL, and WNYV…VVVL. One can recognise an ABC transmembrane type-1 domain in the interval 78-269; it reads LWNSFVVAMA…IPPILVVVLM (192 aa).

Belongs to the binding-protein-dependent transport system permease family. The complex is composed of two ATP-binding proteins (UgpC), two transmembrane proteins (UgpA and UgpE) and a solute-binding protein (UgpB).

Its subcellular location is the cell inner membrane. Part of the ABC transporter complex UgpBAEC involved in sn-glycerol-3-phosphate (G3P) import. Probably responsible for the translocation of the substrate across the membrane. The protein is sn-glycerol-3-phosphate transport system permease protein UgpE (ugpE) of Brucella melitensis biotype 1 (strain ATCC 23456 / CCUG 17765 / NCTC 10094 / 16M).